The sequence spans 439 residues: Chitinase-like protein Idgf1 (439 aa).

An N-terminal signal peptide occupies residues 1 to 20; that stretch reads MRFQLCYLLGLLSVTSLSHA. The 418-residue stretch at 22–439 folds into the GH18 domain; sequence SNLICYYDST…IVRSIKYFMG (418 aa). Cysteine 26 and cysteine 53 form a disulfide bridge. Residues asparagine 122, asparagine 218, and asparagine 346 are each glycosylated (N-linked (GlcNAc...) asparagine). Cysteine 340 and cysteine 423 are joined by a disulfide.

The protein belongs to the glycosyl hydrolase 18 family. IDGF subfamily. Post-translationally, glycosylated.

The protein resides in the secreted. Its function is as follows. Cooperates with insulin-like peptides to stimulate the proliferation, polarization and motility of imaginal disk cells. May act by stabilizing the binding of insulin-like peptides to its receptor through a simultaneous interaction with both molecules to form a multiprotein signaling complex. This is Chitinase-like protein Idgf1 (Idgf1) from Drosophila yakuba (Fruit fly).